A 741-amino-acid polypeptide reads, in one-letter code: Ribosome-releasing factor 2, mitochondrial (741 aa).

A mitochondrion-targeting transit peptide spans 1 to 29; it reads MLKYEFLHGLQKRSHYLRQLSGQFFSRSY. The tr-type G domain occupies 31-310; it reads SKIRNIGILA…AVNSYLPAPE (280 aa). Residues 40-47, 104-108, and 158-161 each bind GTP; these read AHIDAGKT, DTPGH, and NKMD.

This sequence belongs to the TRAFAC class translation factor GTPase superfamily. Classic translation factor GTPase family. EF-G/EF-2 subfamily.

It is found in the mitochondrion. Functionally, mitochondrial GTPase that mediates the disassembly of ribosomes from messenger RNA at the termination of mitochondrial protein biosynthesis. Not involved in the GTP-dependent ribosomal translocation step during translation elongation. The polypeptide is Ribosome-releasing factor 2, mitochondrial (Drosophila ananassae (Fruit fly)).